A 167-amino-acid polypeptide reads, in one-letter code: Small ribosomal subunit protein uS5 (167 aa).

One can recognise an S5 DRBM domain in the interval 12–75; sequence LQEKLIAVNR…EKARRNMVTV (64 aa).

Belongs to the universal ribosomal protein uS5 family. Part of the 30S ribosomal subunit. Contacts proteins S4 and S8.

Functionally, with S4 and S12 plays an important role in translational accuracy. In terms of biological role, located at the back of the 30S subunit body where it stabilizes the conformation of the head with respect to the body. The sequence is that of Small ribosomal subunit protein uS5 from Shewanella oneidensis (strain ATCC 700550 / JCM 31522 / CIP 106686 / LMG 19005 / NCIMB 14063 / MR-1).